A 251-amino-acid polypeptide reads, in one-letter code: Triosephosphate isomerase (251 aa).

9-11 (NWK) contacts substrate. Histidine 95 (electrophile) is an active-site residue. The Proton acceptor role is filled by glutamate 167. Residues glycine 173, serine 212, and 233–234 (GG) contribute to the substrate site.

This sequence belongs to the triosephosphate isomerase family. In terms of assembly, homodimer.

Its subcellular location is the cytoplasm. It carries out the reaction D-glyceraldehyde 3-phosphate = dihydroxyacetone phosphate. The protein operates within carbohydrate biosynthesis; gluconeogenesis. Its pathway is carbohydrate degradation; glycolysis; D-glyceraldehyde 3-phosphate from glycerone phosphate: step 1/1. Involved in the gluconeogenesis. Catalyzes stereospecifically the conversion of dihydroxyacetone phosphate (DHAP) to D-glyceraldehyde-3-phosphate (G3P). This chain is Triosephosphate isomerase, found in Vibrio sp. (strain ANT-300).